Reading from the N-terminus, the 177-residue chain is Putative adenylate kinase (177 aa).

ATP is bound by residues glycine 10, glycine 12, lysine 13, threonine 14, and threonine 15. Residues 30-50 (SLRDYAIEKGIGEMKGDELEV) are NMP. The interval 99–109 (ERGYSREKVGE) is LID. Positions 100 and 138 each coordinate ATP.

The protein belongs to the adenylate kinase family. AK6 subfamily. As to quaternary structure, interacts with uS11. Not a structural component of 40S pre-ribosomes, but transiently interacts with them by binding to uS11.

The enzyme catalyses AMP + ATP = 2 ADP. It carries out the reaction ATP + H2O = ADP + phosphate + H(+). Broad-specificity nucleoside monophosphate (NMP) kinase that catalyzes the reversible transfer of the terminal phosphate group between nucleoside triphosphates and monophosphates. Also has ATPase activity. Involved in the late maturation steps of the 30S ribosomal particles, specifically 16S rRNA maturation. While NMP activity is not required for ribosome maturation, ATPase activity is. Associates transiently with small ribosomal subunit protein uS11. ATP hydrolysis breaks the interaction with uS11. May temporarily remove uS11 from the ribosome to enable a conformational change of the ribosomal RNA that is needed for the final maturation step of the small ribosomal subunit. In Thermococcus gammatolerans (strain DSM 15229 / JCM 11827 / EJ3), this protein is Putative adenylate kinase.